Consider the following 289-residue polypeptide: Epoxyqueuosine reductase (289 aa).

D111 functions as the Proton donor in the catalytic mechanism. One can recognise a 4Fe-4S ferredoxin-type domain in the interval 156 to 185; sequence QGDRPHSQHCGTCTRCLEACPTQAIVEPFV. The [4Fe-4S] cluster site is built by C165, C168, C171, C175, C191, C219, C222, and C226.

It belongs to the QueG family. As to quaternary structure, monomer. Requires cob(II)alamin as cofactor. The cofactor is [4Fe-4S] cluster.

The protein localises to the cytoplasm. It carries out the reaction epoxyqueuosine(34) in tRNA + AH2 = queuosine(34) in tRNA + A + H2O. It functions in the pathway tRNA modification; tRNA-queuosine biosynthesis. Functionally, catalyzes the conversion of epoxyqueuosine (oQ) to queuosine (Q), which is a hypermodified base found in the wobble positions of tRNA(Asp), tRNA(Asn), tRNA(His) and tRNA(Tyr). This Synechocystis sp. (strain ATCC 27184 / PCC 6803 / Kazusa) protein is Epoxyqueuosine reductase.